The primary structure comprises 511 residues: Bifunctional purine biosynthesis protein PurH (511 aa).

Residues 1–145 (MKRRAIISVS…KNHAYVTAVV (145 aa)) enclose the MGS-like domain.

This sequence belongs to the PurH family.

The enzyme catalyses (6R)-10-formyltetrahydrofolate + 5-amino-1-(5-phospho-beta-D-ribosyl)imidazole-4-carboxamide = 5-formamido-1-(5-phospho-D-ribosyl)imidazole-4-carboxamide + (6S)-5,6,7,8-tetrahydrofolate. It catalyses the reaction IMP + H2O = 5-formamido-1-(5-phospho-D-ribosyl)imidazole-4-carboxamide. The protein operates within purine metabolism; IMP biosynthesis via de novo pathway; 5-formamido-1-(5-phospho-D-ribosyl)imidazole-4-carboxamide from 5-amino-1-(5-phospho-D-ribosyl)imidazole-4-carboxamide (10-formyl THF route): step 1/1. Its pathway is purine metabolism; IMP biosynthesis via de novo pathway; IMP from 5-formamido-1-(5-phospho-D-ribosyl)imidazole-4-carboxamide: step 1/1. This chain is Bifunctional purine biosynthesis protein PurH, found in Anoxybacillus flavithermus (strain DSM 21510 / WK1).